A 419-amino-acid polypeptide reads, in one-letter code: Lipid II:glycine glycyltransferase (419 aa).

Belongs to the FemABX family.

The protein localises to the cytoplasm. The catalysed reaction is beta-D-GlcNAc-(1-&gt;4)-Mur2Ac(oyl-L-Ala-D-isoglutaminyl-L-Lys-D-Ala-D-Ala)-di-trans,octa-cis-undecaprenyl diphosphate + glycyl-tRNA(Gly) = beta-D-GlcNAc-(1-&gt;4)-Mur2Ac(oyl-L-Ala-D-isoglutaminyl-L-Lys-(N(6)-Gly)-D-Ala-D-Ala)-di-trans,octa-cis-undecaprenyl diphosphate + tRNA(Gly) + H(+). Catalyzes the incorporation of amino acid(s) into the interchain peptide bridge of peptidoglycan, using aminoacyl-tRNA as amino acid donor. The sequence is that of Lipid II:glycine glycyltransferase (femX) from Staphylococcus haemolyticus (strain JCSC1435).